The sequence spans 102 residues: Small ribosomal subunit protein uS10 (102 aa).

It belongs to the universal ribosomal protein uS10 family. As to quaternary structure, part of the 30S ribosomal subunit.

In terms of biological role, involved in the binding of tRNA to the ribosomes. The protein is Small ribosomal subunit protein uS10 of Chelativorans sp. (strain BNC1).